A 253-amino-acid chain; its full sequence is 3-deoxy-manno-octulosonate cytidylyltransferase (253 aa).

Belongs to the KdsB family.

The protein resides in the cytoplasm. The enzyme catalyses 3-deoxy-alpha-D-manno-oct-2-ulosonate + CTP = CMP-3-deoxy-beta-D-manno-octulosonate + diphosphate. The protein operates within nucleotide-sugar biosynthesis; CMP-3-deoxy-D-manno-octulosonate biosynthesis; CMP-3-deoxy-D-manno-octulosonate from 3-deoxy-D-manno-octulosonate and CTP: step 1/1. It functions in the pathway bacterial outer membrane biogenesis; lipopolysaccharide biosynthesis. Functionally, activates KDO (a required 8-carbon sugar) for incorporation into bacterial lipopolysaccharide in Gram-negative bacteria. The protein is 3-deoxy-manno-octulosonate cytidylyltransferase of Acinetobacter baumannii (strain SDF).